A 304-amino-acid chain; its full sequence is Glutaminase (304 aa).

Positions 63, 114, 158, 165, 189, 240, and 258 each coordinate substrate.

This sequence belongs to the glutaminase family. Homotetramer.

The enzyme catalyses L-glutamine + H2O = L-glutamate + NH4(+). The sequence is that of Glutaminase from Shewanella putrefaciens (strain CN-32 / ATCC BAA-453).